The chain runs to 451 residues: Phosphoglucosamine mutase (451 aa).

Catalysis depends on serine 104, which acts as the Phosphoserine intermediate. Residues serine 104, aspartate 249, aspartate 251, and aspartate 253 each contribute to the Mg(2+) site. Serine 104 bears the Phosphoserine mark.

This sequence belongs to the phosphohexose mutase family. It depends on Mg(2+) as a cofactor. In terms of processing, activated by phosphorylation.

It catalyses the reaction alpha-D-glucosamine 1-phosphate = D-glucosamine 6-phosphate. In terms of biological role, catalyzes the conversion of glucosamine-6-phosphate to glucosamine-1-phosphate. The protein is Phosphoglucosamine mutase of Psychrobacter sp. (strain PRwf-1).